We begin with the raw amino-acid sequence, 964 residues long: Glycine dehydrogenase (decarboxylating) (964 aa).

The residue at position 710 (Lys-710) is an N6-(pyridoxal phosphate)lysine.

The protein belongs to the GcvP family. As to quaternary structure, the glycine cleavage system is composed of four proteins: P, T, L and H. Requires pyridoxal 5'-phosphate as cofactor.

It carries out the reaction N(6)-[(R)-lipoyl]-L-lysyl-[glycine-cleavage complex H protein] + glycine + H(+) = N(6)-[(R)-S(8)-aminomethyldihydrolipoyl]-L-lysyl-[glycine-cleavage complex H protein] + CO2. In terms of biological role, the glycine cleavage system catalyzes the degradation of glycine. The P protein binds the alpha-amino group of glycine through its pyridoxal phosphate cofactor; CO(2) is released and the remaining methylamine moiety is then transferred to the lipoamide cofactor of the H protein. This chain is Glycine dehydrogenase (decarboxylating), found in Saccharophagus degradans (strain 2-40 / ATCC 43961 / DSM 17024).